A 1006-amino-acid polypeptide reads, in one-letter code: uncharacterized protein (1006 aa).

The interval 326–371 is disordered; sequence EMEKKRPRSPELVPKKIVMEKERPSSPDSEAEEREHNLRIEKERHQ. Composition is skewed to basic and acidic residues over residues 338 to 350 and 358 to 371; these read VPKKIVMEKERPS and EREHNLRIEKERHQ. Coiled coils occupy residues 358–473 and 756–782; these read EREH…ARLA and EVQKQRAVDSLNSQYEKERNELDAFGR.

This is an uncharacterized protein from Caenorhabditis elegans.